A 114-amino-acid polypeptide reads, in one-letter code: Protein U68 (114 aa).

Belongs to the herpesviridae UL96 family.

This is Protein U68 (U68) from Homo sapiens (Human).